We begin with the raw amino-acid sequence, 320 residues long: Acetyl-coenzyme A carboxylase carboxyl transferase subunit alpha (320 aa).

Positions Ala-33–Ala-294 constitute a CoA carboxyltransferase C-terminal domain.

It belongs to the AccA family. In terms of assembly, acetyl-CoA carboxylase is a heterohexamer composed of biotin carboxyl carrier protein (AccB), biotin carboxylase (AccC) and two subunits each of ACCase subunit alpha (AccA) and ACCase subunit beta (AccD).

Its subcellular location is the cytoplasm. The catalysed reaction is N(6)-carboxybiotinyl-L-lysyl-[protein] + acetyl-CoA = N(6)-biotinyl-L-lysyl-[protein] + malonyl-CoA. It functions in the pathway lipid metabolism; malonyl-CoA biosynthesis; malonyl-CoA from acetyl-CoA: step 1/1. Functionally, component of the acetyl coenzyme A carboxylase (ACC) complex. First, biotin carboxylase catalyzes the carboxylation of biotin on its carrier protein (BCCP) and then the CO(2) group is transferred by the carboxyltransferase to acetyl-CoA to form malonyl-CoA. The sequence is that of Acetyl-coenzyme A carboxylase carboxyl transferase subunit alpha from Caulobacter sp. (strain K31).